The primary structure comprises 260 residues: Cytochrome c oxidase subunit 3 (260 aa).

Over 1–15 (MTHQTHAYHMVNPSP) the chain is Mitochondrial matrix. The helical transmembrane segment at 16–34 (WPLTGALSALLMTSGLAMW) threads the bilayer. The Mitochondrial intermembrane segment spans residues 35 to 40 (FHFNST). The chain crosses the membrane as a helical span at residues 41 to 66 (ALLMIGLTTNMLTMYQWWRDIIREST). Over 67–72 (FQGHHT) the chain is Mitochondrial matrix. A helical transmembrane segment spans residues 73 to 105 (PAVQKGLRYGMILFIISEVLFFTGFFWAFYHSS). At 106–128 (LAPTPELGGCWPPTGIHPLNPLE) the chain is on the mitochondrial intermembrane side. The chain crosses the membrane as a helical span at residues 129–152 (VPLLNTSVLLASGVSITWAHHSLM). The Mitochondrial matrix portion of the chain corresponds to 153 to 155 (EGD). Residues 156–183 (RNHMLQALFITITLGVYFTLLQASEYYE) form a helical membrane-spanning segment. Residues 184-190 (APFTISD) are Mitochondrial intermembrane-facing. A helical membrane pass occupies residues 191–223 (GVYGSTFFVATGFHGLHVIIGSTFLIVCFFRQL). The Mitochondrial matrix portion of the chain corresponds to 224 to 232 (KFHFTSNHH). A helical membrane pass occupies residues 233–256 (FGFEAAAWYWHFVDVVWLFLYVSI). At 257-260 (YWWG) the chain is on the mitochondrial intermembrane side.

It belongs to the cytochrome c oxidase subunit 3 family. In terms of assembly, component of the cytochrome c oxidase (complex IV, CIV), a multisubunit enzyme composed of 14 subunits. The complex is composed of a catalytic core of 3 subunits MT-CO1, MT-CO2 and MT-CO3, encoded in the mitochondrial DNA, and 11 supernumerary subunits COX4I, COX5A, COX5B, COX6A, COX6B, COX6C, COX7A, COX7B, COX7C, COX8 and NDUFA4, which are encoded in the nuclear genome. The complex exists as a monomer or a dimer and forms supercomplexes (SCs) in the inner mitochondrial membrane with NADH-ubiquinone oxidoreductase (complex I, CI) and ubiquinol-cytochrome c oxidoreductase (cytochrome b-c1 complex, complex III, CIII), resulting in different assemblies (supercomplex SCI(1)III(2)IV(1) and megacomplex MCI(2)III(2)IV(2)).

The protein resides in the mitochondrion inner membrane. The catalysed reaction is 4 Fe(II)-[cytochrome c] + O2 + 8 H(+)(in) = 4 Fe(III)-[cytochrome c] + 2 H2O + 4 H(+)(out). Component of the cytochrome c oxidase, the last enzyme in the mitochondrial electron transport chain which drives oxidative phosphorylation. The respiratory chain contains 3 multisubunit complexes succinate dehydrogenase (complex II, CII), ubiquinol-cytochrome c oxidoreductase (cytochrome b-c1 complex, complex III, CIII) and cytochrome c oxidase (complex IV, CIV), that cooperate to transfer electrons derived from NADH and succinate to molecular oxygen, creating an electrochemical gradient over the inner membrane that drives transmembrane transport and the ATP synthase. Cytochrome c oxidase is the component of the respiratory chain that catalyzes the reduction of oxygen to water. Electrons originating from reduced cytochrome c in the intermembrane space (IMS) are transferred via the dinuclear copper A center (CU(A)) of subunit 2 and heme A of subunit 1 to the active site in subunit 1, a binuclear center (BNC) formed by heme A3 and copper B (CU(B)). The BNC reduces molecular oxygen to 2 water molecules using 4 electrons from cytochrome c in the IMS and 4 protons from the mitochondrial matrix. The polypeptide is Cytochrome c oxidase subunit 3 (MT-CO3) (Bos mutus grunniens (Wild yak)).